Reading from the N-terminus, the 540-residue chain is H(+)/hexose cotransporter 2 (540 aa).

The Cytoplasmic segment spans residues 1 to 29 (MAGGGPVASTTTNRASQYGYARGGLNWYI). Residues 30-50 (FIVALTAGSGGLLFGYDIGVT) traverse the membrane as a helical segment. Residues 51 to 90 (GGVTSMPEFLQKFFPSIYDRTQQPSDSKDPYCTYDDQKLQ) are Extracellular-facing. The chain crosses the membrane as a helical span at residues 91 to 111 (LFTSSFFLAGMFVSFFAGSVV). At 112–124 (RRWGRKPTMLIAS) the chain is on the cytoplasmic side. The chain crosses the membrane as a helical span at residues 125–135 (VLFLAGAGLNA). Topologically, residues 136–147 (GAQDLAMLVIGR) are extracellular. Residues 148–168 (VLLGFGVGGGNNAVPLYLSEC) traverse the membrane as a helical segment. Topologically, residues 169 to 176 (APPKYRGG) are cytoplasmic. The chain crosses the membrane as a helical span at residues 177 to 197 (LNMMFQLAVTIGIIVAQLVNY). Topologically, residues 198–207 (GTQTMNNGWR) are extracellular. Residues 208-228 (LSLGLAGVPAIILLIGSLLLP) traverse the membrane as a helical segment. The Cytoplasmic segment spans residues 229–296 (ETPNSLIERG…YSPMLIVTSL (68 aa)). Residues 297 to 317 (IAMLQQLTGINAIMFYVPVLF) traverse the membrane as a helical segment. Residues 318–326 (SSFGTARHA) are Extracellular-facing. A helical membrane pass occupies residues 327–337 (ALLNTVIIGAV). Residues 338–355 (NVAATFVSIFSVDKFGRR) are Cytoplasmic-facing. Residues 356–376 (GLFLEGGIQMFIGQVVTAAVL) form a helical membrane-spanning segment. Over 377–396 (GVELNKYGTNLPSSTAAGVL) the chain is Extracellular. The helical transmembrane segment at 397–417 (VVICVYVAAFAWSWGPLGWLV) threads the bilayer. The Cytoplasmic portion of the chain corresponds to 418–435 (PSEIQTLETRGAGMSMAV). The chain crosses the membrane as a helical span at residues 436 to 456 (IVNFLFSFVIGQAFLSMMCAM). Residues 457-458 (RW) are Extracellular-facing. Residues 459-479 (GVFLFFAGWVVIMTFFVYFCL) form a helical membrane-spanning segment. Topologically, residues 480 to 540 (PETKGVPVET…SEDGKPASDQ (61 aa)) are cytoplasmic.

The protein belongs to the major facilitator superfamily. Sugar transporter (TC 2.A.1.1) family.

It is found in the membrane. In terms of biological role, active uptake of galactose. In Parachlorella kessleri (Green alga), this protein is H(+)/hexose cotransporter 2 (HUP2).